Consider the following 524-residue polypeptide: 2-isopropylmalate synthase (524 aa).

Residues 12–274 enclose the Pyruvate carboxyltransferase domain; sequence VIIFDTTLRD…WNNIETTMLT (263 aa). Residues Asp-21, His-209, His-211, and Asn-245 each contribute to the Mn(2+) site. Residues 398–524 form a regulatory domain region; the sequence is KLNSLTVIAG…EAVPAVAAAG (127 aa).

The protein belongs to the alpha-IPM synthase/homocitrate synthase family. LeuA type 1 subfamily. Homodimer. Requires Mn(2+) as cofactor.

It is found in the cytoplasm. It catalyses the reaction 3-methyl-2-oxobutanoate + acetyl-CoA + H2O = (2S)-2-isopropylmalate + CoA + H(+). It participates in amino-acid biosynthesis; L-leucine biosynthesis; L-leucine from 3-methyl-2-oxobutanoate: step 1/4. Catalyzes the condensation of the acetyl group of acetyl-CoA with 3-methyl-2-oxobutanoate (2-ketoisovalerate) to form 3-carboxy-3-hydroxy-4-methylpentanoate (2-isopropylmalate). This chain is 2-isopropylmalate synthase, found in Rhodopseudomonas palustris (strain HaA2).